The primary structure comprises 225 residues: Heptaprenylglyceryl phosphate synthase (225 aa).

Residue Lys-6 coordinates sn-glycerol 1-phosphate. 2 residues coordinate Mg(2+): Asp-8 and Thr-34. Sn-glycerol 1-phosphate is bound by residues 153 to 158 (YVEYSG), Gly-183, and 203 to 204 (GN).

It belongs to the GGGP/HepGP synthase family. Group I subfamily. As to quaternary structure, homodimer. Mg(2+) is required as a cofactor.

It catalyses the reaction sn-glycerol 1-phosphate + all-trans-heptaprenyl diphosphate = 3-heptaprenyl-sn-glycero-1-phosphate + diphosphate. The protein operates within membrane lipid metabolism; glycerophospholipid metabolism. In terms of biological role, prenyltransferase that catalyzes in vivo the transfer of the heptaprenyl moiety of heptaprenyl pyrophosphate (HepPP; 35 carbon atoms) to the C3 hydroxyl of sn-glycerol-1-phosphate (G1P), producing heptaprenylglyceryl phosphate (HepGP). This reaction is an ether-bond-formation step in the biosynthesis of archaea-type G1P-based membrane lipids found in Bacillales. This chain is Heptaprenylglyceryl phosphate synthase, found in Listeria monocytogenes serotype 4b (strain F2365).